The primary structure comprises 32 residues: Delta-conotoxin EVIA (32 aa).

3 disulfides stabilise this stretch: Cys3–Cys21, Cys10–Cys25, and Cys20–Cys29. At Pro6 the chain carries 4-hydroxyproline. Leu32 carries the leucine amide modification.

Belongs to the conotoxin O1 superfamily. As to expression, expressed by the venom duct.

It is found in the secreted. Delta-conotoxins bind to site 6 of voltage-gated sodium channels and inhibit the inactivation process. This toxin inhibits sodium channel inactivation in neuronal membranes from amphibians and mammals (Nav1.2a/SCN1A, Nav1.3/SCN3A and Nav1.6/SCN8A) upon binding to receptor site 6. This is Delta-conotoxin EVIA from Conus ermineus (Agate cone).